Consider the following 518-residue polypeptide: Glutamate--cysteine ligase (518 aa).

The protein belongs to the glutamate--cysteine ligase type 1 family. Type 1 subfamily.

It catalyses the reaction L-cysteine + L-glutamate + ATP = gamma-L-glutamyl-L-cysteine + ADP + phosphate + H(+). It participates in sulfur metabolism; glutathione biosynthesis; glutathione from L-cysteine and L-glutamate: step 1/2. The sequence is that of Glutamate--cysteine ligase from Salmonella agona (strain SL483).